Reading from the N-terminus, the 427-residue chain is Histidinol dehydrogenase (427 aa).

NAD(+) contacts are provided by Tyr-127, Gln-185, and Asn-208. Residues Ser-232, Gln-254, and His-257 each coordinate substrate. Positions 254 and 257 each coordinate Zn(2+). Residues Glu-321 and His-322 each act as proton acceptor in the active site. The substrate site is built by His-322, Asp-355, Glu-409, and His-414. Asp-355 provides a ligand contact to Zn(2+). His-414 lines the Zn(2+) pocket.

It belongs to the histidinol dehydrogenase family. Zn(2+) serves as cofactor.

It carries out the reaction L-histidinol + 2 NAD(+) + H2O = L-histidine + 2 NADH + 3 H(+). It participates in amino-acid biosynthesis; L-histidine biosynthesis; L-histidine from 5-phospho-alpha-D-ribose 1-diphosphate: step 9/9. Its function is as follows. Catalyzes the sequential NAD-dependent oxidations of L-histidinol to L-histidinaldehyde and then to L-histidine. This Haemophilus influenzae (strain 86-028NP) protein is Histidinol dehydrogenase.